Reading from the N-terminus, the 205-residue chain is Urease accessory protein UreG (205 aa).

Residue 10 to 17 (GPVGAGKT) coordinates GTP.

The protein belongs to the SIMIBI class G3E GTPase family. UreG subfamily. Homodimer. UreD, UreF and UreG form a complex that acts as a GTP-hydrolysis-dependent molecular chaperone, activating the urease apoprotein by helping to assemble the nickel containing metallocenter of UreC. The UreE protein probably delivers the nickel.

It is found in the cytoplasm. Its function is as follows. Facilitates the functional incorporation of the urease nickel metallocenter. This process requires GTP hydrolysis, probably effectuated by UreG. This chain is Urease accessory protein UreG, found in Corynebacterium glutamicum (strain ATCC 13032 / DSM 20300 / JCM 1318 / BCRC 11384 / CCUG 27702 / LMG 3730 / NBRC 12168 / NCIMB 10025 / NRRL B-2784 / 534).